We begin with the raw amino-acid sequence, 83 residues long: uncharacterized protein (83 aa).

Residues Ala-24–Leu-44 traverse the membrane as a helical segment.

It localises to the host membrane. This is an uncharacterized protein from Acidianus sp. F28 (AFV-2).